The following is a 724-amino-acid chain: Peroxidase mlt-7 (724 aa).

Residues 1–24 (MRRLHRNLSLLFLICILNEYRIES) form the signal peptide. N-linked (GlcNAc...) asparagine glycosylation occurs at Asn-7. A propeptide spanning residues 25–178 (QTLSPPITDR…GCVPQLSDVG (154 aa)) is cleaved from the precursor. Positions 42–76 (CCDHHEWCRFWASIGECNANKDWMTENCQLACGTC) constitute a ShKT domain. A disulfide bridge links Cys-181 with Cys-198. An N-linked (GlcNAc...) asparagine glycan is attached at Asn-233. His-271 functions as the Proton acceptor in the catalytic mechanism. Asp-272 contributes to the Ca(2+) binding site. A disulfide bridge connects residues Cys-284 and Cys-294. Ca(2+) contacts are provided by Thr-335, Tyr-337, Asp-339, and Ser-341. His-493 is a heme b binding site. 2 N-linked (GlcNAc...) asparagine glycosylation sites follow: Asn-509 and Asn-617. 2 disulfides stabilise this stretch: Cys-588/Cys-645 and Cys-686/Cys-710.

It belongs to the peroxidase family. Heme b serves as cofactor. As to expression, expressed in the hypodermal cells, specifically the head and seam/body.

It carries out the reaction 2 a phenolic donor + H2O2 = 2 a phenolic radical donor + 2 H2O. In terms of biological role, plays an essential role in cuticle biogenesis. Required in combination with bli-3 for correct formation of cross-links in cuticle collagens. The polypeptide is Peroxidase mlt-7 (Caenorhabditis elegans).